Reading from the N-terminus, the 836-residue chain is Protein O-mannosyl-transferase tmtc2 (836 aa).

Residues 1-21 (MIAELLSSALGLLLYLNTLGA) traverse the membrane as a helical segment. Residues 22–77 (DFCYDDSRAIKTNQDLLPETPWNHIFFNDFWGTLLTHSGSHKSYRPLCTLSFRLNY) lie on the Extracellular side of the membrane. A helical transmembrane segment spans residues 78–98 (LFGGLDPWNYHLVNVLLHSAV). The Cytoplasmic segment spans residues 99–107 (TGLFTNLCK). A helical membrane pass occupies residues 108–128 (ALFGSGCWTLIAGLLFASHPI). Residues 129–132 (HTEA) are Extracellular-facing. The chain crosses the membrane as a helical span at residues 133–153 (VSGIVGRADVGSGLFFLLSLL). Topologically, residues 154–164 (CYMKHCSTRGY) are cytoplasmic. A helical transmembrane segment spans residues 165-185 (SLSSWCWILCAGFWAACSMLW). Residues 186–188 (KEQ) lie on the Extracellular side of the membrane. A helical membrane pass occupies residues 189 to 209 (GVTVLAVSAVYDVFVFHKLKM). Residues 210-220 (NQIISVVFKEK) lie on the Cytoplasmic side of the membrane. A helical transmembrane segment spans residues 221 to 241 (NVSFFFSVGLLFAWGVILLGA). Over 242-312 (RFYWMGNTPP…KTITDWRNIH (71 aa)) the chain is Extracellular. A helical membrane pass occupies residues 313–333 (TVAFYILLILLAYSSLKGSAI). Residues 334–392 (KRDCNGKVFMNGKQNTNGHSCQSDLEHKNAEQNPVIASKLENGVKHHNSHEMQLPSTEN) are Cytoplasmic-facing. A helical transmembrane segment spans residues 393–413 (IVVLALSLLIVPFVPASNLFF). Position 414 (Y414) is a topological domain, extracellular. Residues 415 to 435 (VGFVIAERVLYIPSMGFCLLV) traverse the membrane as a helical segment. The Cytoplasmic segment spans residues 436–449 (TVGARALYIKAQKN). Residues 450 to 470 (ILKNLLFYATAALIVFYGLKT) traverse the membrane as a helical segment. Residues 471–836 (VVRNGDWKNE…EKQGLKNSKT (366 aa)) lie on the Extracellular side of the membrane. TPR repeat units follow at residues 493–526 (AKAW…RSNM), 527–560 (ADML…RPTL), 561–594 (ASGY…PDEN), 606–639 (TSCL…MPRQ), 643–676 (QSLY…KPDH), 677–710 (IPAH…DPNK), 711–744 (GNCY…DSSE), 745–778 (FDVV…RQNY), and 779–812 (PAAL…KPDD).

Belongs to the TMTC family.

The protein localises to the membrane. It localises to the endoplasmic reticulum. The enzyme catalyses a di-trans,poly-cis-dolichyl beta-D-mannosyl phosphate + L-seryl-[protein] = 3-O-(alpha-D-mannosyl)-L-seryl-[protein] + a di-trans,poly-cis-dolichyl phosphate + H(+). It carries out the reaction a di-trans,poly-cis-dolichyl beta-D-mannosyl phosphate + L-threonyl-[protein] = 3-O-(alpha-D-mannosyl)-L-threonyl-[protein] + a di-trans,poly-cis-dolichyl phosphate + H(+). It functions in the pathway protein modification; protein glycosylation. In terms of biological role, transfers mannosyl residues to the hydroxyl group of serine or threonine residues. This Xenopus laevis (African clawed frog) protein is Protein O-mannosyl-transferase tmtc2 (tmtc2).